The primary structure comprises 318 residues: Deacetoxycephalosporin C hydroxylase (318 aa).

One can recognise a Fe2OG dioxygenase domain in the interval 158-271 (DADPVLRLRY…RTSSVFFLRP (114 aa)).

It belongs to the iron/ascorbate-dependent oxidoreductase family. Monomer. Fe cation is required as a cofactor.

The catalysed reaction is deacetoxycephalosporin C + 2-oxoglutarate + O2 = deacetylcephalosporin C + succinate + CO2. Its pathway is antibiotic biosynthesis; cephalosporin C biosynthesis. Hydroxylation of desacetoxicephalosporin C in 3'position to form deacetylcephalosporin C. The chain is Deacetoxycephalosporin C hydroxylase (cefF) from Streptomyces clavuligerus.